The primary structure comprises 150 residues: Urease accessory protein UreE (150 aa).

The protein belongs to the UreE family.

The protein localises to the cytoplasm. Involved in urease metallocenter assembly. Binds nickel. Probably functions as a nickel donor during metallocenter assembly. The sequence is that of Urease accessory protein UreE from Staphylococcus aureus (strain MRSA252).